We begin with the raw amino-acid sequence, 123 residues long: Large ribosomal subunit protein uL14 (123 aa).

Belongs to the universal ribosomal protein uL14 family. Part of the 50S ribosomal subunit. Forms a cluster with proteins L3 and L19. In the 70S ribosome, L14 and L19 interact and together make contacts with the 16S rRNA in bridges B5 and B8.

Binds to 23S rRNA. Forms part of two intersubunit bridges in the 70S ribosome. The chain is Large ribosomal subunit protein uL14 from Escherichia coli O139:H28 (strain E24377A / ETEC).